Reading from the N-terminus, the 442-residue chain is Glutamate--tRNA ligase 1 (442 aa).

The 'HIGH' region motif lies at proline 9–asparagine 19. Positions lysine 240–arginine 244 match the 'KMSKS' region motif. Lysine 243 provides a ligand contact to ATP.

It belongs to the class-I aminoacyl-tRNA synthetase family. Glutamate--tRNA ligase type 1 subfamily. As to quaternary structure, monomer.

Its subcellular location is the cytoplasm. It carries out the reaction tRNA(Glu) + L-glutamate + ATP = L-glutamyl-tRNA(Glu) + AMP + diphosphate. Its function is as follows. Catalyzes the attachment of glutamate to tRNA(Glu) in a two-step reaction: glutamate is first activated by ATP to form Glu-AMP and then transferred to the acceptor end of tRNA(Glu). This is Glutamate--tRNA ligase 1 from Novosphingobium aromaticivorans (strain ATCC 700278 / DSM 12444 / CCUG 56034 / CIP 105152 / NBRC 16084 / F199).